The primary structure comprises 444 residues: Tubulin beta 8B (444 aa).

Positions 1–4 (MREI) match the MREI motif motif. The GTP site is built by Gln11, Glu69, Ser138, Gly142, Thr143, and Gly144. Residue Glu69 coordinates Mg(2+). Ser172 carries the post-translational modification Phosphoserine; by CDK1. GTP is bound by residues Asn204 and Asn226. Positions 421-444 (EYQQYQDATAEEEEDEEYAEEEVA) are disordered. The span at 429–444 (TAEEEEDEEYAEEEVA) shows a compositional bias: acidic residues. Glu436 is subject to 5-glutamyl polyglutamate.

This sequence belongs to the tubulin family. Dimer of alpha and beta chains. A typical microtubule is a hollow water-filled tube with an outer diameter of 25 nm and an inner diameter of 15 nM. Alpha-beta heterodimers associate head-to-tail to form protofilaments running lengthwise along the microtubule wall with the beta-tubulin subunit facing the microtubule plus end conferring a structural polarity. Microtubules usually have 13 protofilaments but different protofilament numbers can be found in some organisms and specialized cells. Requires Mg(2+) as cofactor. Some glutamate residues at the C-terminus are polyglutamylated, resulting in polyglutamate chains on the gamma-carboxyl group. Polyglutamylation plays a key role in microtubule severing by spastin (SPAST). SPAST preferentially recognizes and acts on microtubules decorated with short polyglutamate tails: severing activity by SPAST increases as the number of glutamates per tubulin rises from one to eight, but decreases beyond this glutamylation threshold. Glutamylation is also involved in cilia motility. Post-translationally, some glutamate residues at the C-terminus are monoglycylated but not polyglycylated due to the absence of functional TTLL10 in human. Monoglycylation is mainly limited to tubulin incorporated into cilia and flagella axonemes, which is required for their stability and maintenance. Flagella glycylation controls sperm motility. Both polyglutamylation and monoglycylation can coexist on the same protein on adjacent residues, and lowering glycylation levels increases polyglutamylation, and reciprocally. In terms of processing, phosphorylated on Ser-172 by CDK1 during the cell cycle, from metaphase to telophase, but not in interphase. This phosphorylation inhibits tubulin incorporation into microtubules.

The protein resides in the cytoplasm. It is found in the cytoskeleton. Functionally, tubulin is the major constituent of microtubules, a cylinder consisting of laterally associated linear protofilaments composed of alpha- and beta-tubulin heterodimers. Microtubules grow by the addition of GTP-tubulin dimers to the microtubule end, where a stabilizing cap forms. Below the cap, tubulin dimers are in GDP-bound state, owing to GTPase activity of alpha-tubulin. The chain is Tubulin beta 8B from Homo sapiens (Human).